Consider the following 174-residue polypeptide: Guided entry of tail-anchored proteins factor 1 (174 aa).

Topologically, residues 1 to 8 (MSAAEADR) are lumenal. A helical transmembrane segment spans residues 9 to 29 (WAWLLVLSFVFGCNVLRILLP). At 30-99 (SFSFFMSRVL…VKARTAQLAK (70 aa)) the chain is on the cytoplasmic side. The stretch at 39-94 (LQKDAEQESQMRAEIQGMKQELSTVNMMDEFARYARLERKINKMTDKLKTHVKART) forms a coiled coil. The interaction with GET3/TRC40 stretch occupies residues 39–97 (LQKDAEQESQMRAEIQGMKQELSTVNMMDEFARYARLERKINKMTDKLKTHVKARTAQL). The chain crosses the membrane as a helical span at residues 100-120 (IKWVISVAFYILQAALMVSLI). Residues 121–148 (WKYYSVPVAVVPSKWITPLDRLVAFPTR) are Lumenal-facing. The helical transmembrane segment at 149–169 (VAGGVGITCWILVCNKVVAIV) threads the bilayer. At 170 to 174 (LHPFS) the chain is on the cytoplasmic side.

The protein belongs to the WRB/GET1 family. Component of the Golgi to ER traffic (GET) complex, which is composed of GET1/WRB, CAMLG/GET2 and GET3. Within the complex, GET1 and CAMLG form a heterotetramer which is stabilized by phosphatidylinositol binding and which binds to the GET3 homodimer. Interacts with CAMLG (via C-terminus). GET3 shows a higher affinity for CAMLG than for GET1.

It is found in the endoplasmic reticulum membrane. Functionally, required for the post-translational delivery of tail-anchored (TA) proteins to the endoplasmic reticulum. Together with CAMLG/GET2, acts as a membrane receptor for soluble GET3/TRC40, which recognizes and selectively binds the transmembrane domain of TA proteins in the cytosol. Required to ensure correct topology and ER insertion of CAMLG. The chain is Guided entry of tail-anchored proteins factor 1 from Bos taurus (Bovine).